Reading from the N-terminus, the 218-residue chain is Peptide methionine sulfoxide reductase MsrA (218 aa).

Residues 1 to 28 (MSFLDSYRKKTQMPSTDEALPGRAQPIP) are disordered. Cys-57 is an active-site residue.

It belongs to the MsrA Met sulfoxide reductase family.

It catalyses the reaction L-methionyl-[protein] + [thioredoxin]-disulfide + H2O = L-methionyl-(S)-S-oxide-[protein] + [thioredoxin]-dithiol. It carries out the reaction [thioredoxin]-disulfide + L-methionine + H2O = L-methionine (S)-S-oxide + [thioredoxin]-dithiol. Functionally, has an important function as a repair enzyme for proteins that have been inactivated by oxidation. Catalyzes the reversible oxidation-reduction of methionine sulfoxide in proteins to methionine. The sequence is that of Peptide methionine sulfoxide reductase MsrA from Brucella anthropi (strain ATCC 49188 / DSM 6882 / CCUG 24695 / JCM 21032 / LMG 3331 / NBRC 15819 / NCTC 12168 / Alc 37) (Ochrobactrum anthropi).